Here is a 451-residue protein sequence, read N- to C-terminus: Probable plasmid replicative DNA helicase (451 aa).

Residues 194–451 enclose the SF4 helicase domain; it reads NDSFYDGLPT…SKFSAIKKVW (258 aa). 225 to 232 contacts ATP; sequence ARPSIGKT.

This sequence belongs to the helicase family. DnaB subfamily. Homohexamer.

It carries out the reaction Couples ATP hydrolysis with the unwinding of duplex DNA at the replication fork by translocating in the 5'-3' direction. This creates two antiparallel DNA single strands (ssDNA). The leading ssDNA polymer is the template for DNA polymerase III holoenzyme which synthesizes a continuous strand.. The catalysed reaction is ATP + H2O = ADP + phosphate + H(+). Its function is as follows. A replicative DNA helicase, it participates in initiation and elongation during DNA replication. Travels ahead of the DNA replisome, separating dsDNA into templates for DNA synthesis. A processive ATP-dependent 5'-3' DNA helicase it has DNA-dependent ATPase activity. This Chlamydia muridarum (strain MoPn / Nigg) protein is Probable plasmid replicative DNA helicase.